Reading from the N-terminus, the 106-residue chain is Large ribosomal subunit protein bL21 (106 aa).

This sequence belongs to the bacterial ribosomal protein bL21 family. As to quaternary structure, part of the 50S ribosomal subunit. Contacts protein L20.

This protein binds to 23S rRNA in the presence of protein L20. In Xanthomonas campestris pv. campestris (strain ATCC 33913 / DSM 3586 / NCPPB 528 / LMG 568 / P 25), this protein is Large ribosomal subunit protein bL21.